Reading from the N-terminus, the 49-residue chain is Large ribosomal subunit protein bL33B (49 aa).

The protein belongs to the bacterial ribosomal protein bL33 family.

The sequence is that of Large ribosomal subunit protein bL33B from Lactobacillus helveticus (strain DPC 4571).